The following is a 155-amino-acid chain: Endoribonuclease YbeY (155 aa).

Positions 114, 118, and 124 each coordinate Zn(2+).

This sequence belongs to the endoribonuclease YbeY family. Zn(2+) serves as cofactor.

It localises to the cytoplasm. Its function is as follows. Single strand-specific metallo-endoribonuclease involved in late-stage 70S ribosome quality control and in maturation of the 3' terminus of the 16S rRNA. This chain is Endoribonuclease YbeY, found in Shigella flexneri serotype 5b (strain 8401).